Consider the following 363-residue polypeptide: Ribosome-binding ATPase YchF (363 aa).

One can recognise an OBG-type G domain in the interval 3 to 257; it reads FKCGFVGLPN…VSAYDHLSLK (255 aa). 12–17 contacts ATP; the sequence is NVGKST. Residues S16 and T36 each contribute to the Mg(2+) site. The TGS domain occupies 278–361; the sequence is NLITFFTAGK…CDGDIIHVLY (84 aa).

Belongs to the TRAFAC class OBG-HflX-like GTPase superfamily. OBG GTPase family. YchF/OLA1 subfamily. Mg(2+) is required as a cofactor.

Functionally, ATPase that binds to both the 70S ribosome and the 50S ribosomal subunit in a nucleotide-independent manner. The chain is Ribosome-binding ATPase YchF from Buchnera aphidicola subsp. Baizongia pistaciae (strain Bp).